The primary structure comprises 216 residues: Probable succinyl-CoA:3-ketoacid coenzyme A transferase subunit B (216 aa).

Glu-47 is a catalytic residue.

Belongs to the 3-oxoacid CoA-transferase subunit B family. Heterodimer of a subunit A and a subunit B.

It carries out the reaction a 3-oxo acid + succinyl-CoA = a 3-oxoacyl-CoA + succinate. The polypeptide is Probable succinyl-CoA:3-ketoacid coenzyme A transferase subunit B (scoB) (Bacillus subtilis (strain 168)).